The primary structure comprises 369 residues: Aminomethyltransferase (369 aa).

This sequence belongs to the GcvT family. In terms of assembly, the glycine cleavage system is composed of four proteins: P, T, L and H.

The catalysed reaction is N(6)-[(R)-S(8)-aminomethyldihydrolipoyl]-L-lysyl-[protein] + (6S)-5,6,7,8-tetrahydrofolate = N(6)-[(R)-dihydrolipoyl]-L-lysyl-[protein] + (6R)-5,10-methylene-5,6,7,8-tetrahydrofolate + NH4(+). In terms of biological role, the glycine cleavage system catalyzes the degradation of glycine. The polypeptide is Aminomethyltransferase (Alkaliphilus metalliredigens (strain QYMF)).